The primary structure comprises 88 residues: Pigment dispersing factor homolog pdf-1 (88 aa).

A signal peptide spans 1–21 (MNRFIISMIALLAVFCAVSTA).

The protein localises to the secreted. Probable ligand of isoforms a and b of the calcitonin receptor-like protein, pdfr-1, a G-protein coupled receptor. May not signal through isoform c of pdfr-1. Involved in locomotion; more specifically mate searching behavior of males, independent of nutritional status. Involved in regulating the male-specific expression of TGFbeta-like daf-7 in the ASJ chemosensory neurons. Plays a role in circadian rhythms of locomotor activity. Involved in mediating arousal from the sleep-like state called lethargus, which occurs during molting between larval and adult stages, in part by regulating touch sensitivity, and working in concert with neuropeptide flp-2. In the presence of food, plays a role in initiating and extending exploratory roaming behavior, in opposition to 5-hydroxytryptamine (serotonin) signaling. This is Pigment dispersing factor homolog pdf-1 from Caenorhabditis elegans.